Consider the following 399-residue polypeptide: Succinyl-diaminopimelate desuccinylase (399 aa).

Histidine 80 provides a ligand contact to Zn(2+). Aspartate 82 is an active-site residue. Position 113 (aspartate 113) interacts with Zn(2+). The Proton acceptor role is filled by glutamate 147. Zn(2+) contacts are provided by glutamate 148, glutamate 176, and histidine 366.

This sequence belongs to the peptidase M20A family. DapE subfamily. Homodimer. It depends on Zn(2+) as a cofactor. Requires Co(2+) as cofactor.

The enzyme catalyses N-succinyl-(2S,6S)-2,6-diaminopimelate + H2O = (2S,6S)-2,6-diaminopimelate + succinate. Its pathway is amino-acid biosynthesis; L-lysine biosynthesis via DAP pathway; LL-2,6-diaminopimelate from (S)-tetrahydrodipicolinate (succinylase route): step 3/3. Catalyzes the hydrolysis of N-succinyl-L,L-diaminopimelic acid (SDAP), forming succinate and LL-2,6-diaminopimelate (DAP), an intermediate involved in the bacterial biosynthesis of lysine and meso-diaminopimelic acid, an essential component of bacterial cell walls. The polypeptide is Succinyl-diaminopimelate desuccinylase (Colwellia psychrerythraea (strain 34H / ATCC BAA-681) (Vibrio psychroerythus)).